We begin with the raw amino-acid sequence, 324 residues long: Probable UDP-sugar transporter protein SLC35A4 (324 aa).

Topologically, residues 1–18 are cytoplasmic; that stretch reads MSVEDGGMPGLARPKQAR. Residues 19-39 form a helical membrane-spanning segment; that stretch reads WTLMLFLSTAMYGAHAPFLAL. Topologically, residues 40-52 are lumenal; the sequence is CHVDGRVPFRPSS. Residues 53–73 form a helical membrane-spanning segment; sequence AVLLTELTKLLLCAFSLLVGW. At 74–85 the chain is on the cytoplasmic side; the sequence is QTWPQGTPPWRQ. A helical membrane pass occupies residues 86 to 106; it reads AAPFALSALLYGANNNLVIYL. At 107–142 the chain is on the lumenal side; the sequence is QRYMDPSTYQVLSNLKIGSTALLYCLCLGHRLSARQ. A helical transmembrane segment spans residues 143-163; sequence GLALLLLMAAGACYASGGFQE. The Cytoplasmic segment spans residues 164–180; that stretch reads PGNTLPGPRSAAGARPM. The chain crosses the membrane as a helical span at residues 181 to 201; it reads PLHITPLGLLLLILYCLISGL. Topologically, residues 202-214 are lumenal; that stretch reads SSVYTELIMKRQR. Residues 215–235 form a helical membrane-spanning segment; it reads LPLALQNLFLYTFGVILNLGL. The Cytoplasmic portion of the chain corresponds to 236-248; sequence YAGSGPGPGFLEG. Residues 249-271 traverse the membrane as a helical segment; the sequence is FSGWAVLVVLNQAVNGLLMSAVM. The Lumenal portion of the chain corresponds to 272–279; it reads KHGSSITR. The helical transmembrane segment at 280–300 threads the bilayer; it reads LFIVSCSLVVNAVLSAVLLQL. The Cytoplasmic portion of the chain corresponds to 301-324; that stretch reads QLTATFFLAALLIGLAVCLYYGSP.

The protein belongs to the nucleotide-sugar transporter family. SLC35A subfamily. Found in a complex with SLC35A2 and SLC35A3. In terms of tissue distribution, expressed in the kidney, lung, testis, and prostate. Expressed in the brain by sets of neurons, such as the pyramidal cells of the cortex, the Purkinje cells of the cerebellum, and the motoneurons of the brainstem.

The protein localises to the golgi apparatus membrane. It carries out the reaction CDP-L-ribitol(in) + CDP(out) = CDP-L-ribitol(out) + CDP(in). In terms of biological role, mediates the transport of CDP-ribitol. Does not exhibit CMP-sialic acid, UDP-galactose and UDP-N-acetylglucosamine transport activity. The protein is Probable UDP-sugar transporter protein SLC35A4 of Rattus norvegicus (Rat).